A 751-amino-acid polypeptide reads, in one-letter code: Pyridoxal-dependent decarboxylase domain-containing protein 1 (751 aa).

A disordered region spans residues 659-751 (QMRKEDSPDS…QEAESVETIR (93 aa)). Positions 690–702 (DSISETSSVSQLE) are enriched in polar residues. The segment covering 720–729 (PQERPAHILE) has biased composition (basic and acidic residues). Positions 742 to 751 (QEAESVETIR) are enriched in acidic residues.

This sequence belongs to the group II decarboxylase family. Pyridoxal 5'-phosphate serves as cofactor.

The protein is Pyridoxal-dependent decarboxylase domain-containing protein 1 (pdxdc1) of Danio rerio (Zebrafish).